A 790-amino-acid chain; its full sequence is LPS-assembly protein LptD (790 aa).

Positions 1-20 are cleaved as a signal peptide; the sequence is MRMLRWLILSAFSVAGAVQA.

Belongs to the LptD family. Component of the lipopolysaccharide transport and assembly complex. Interacts with LptE and LptA.

It localises to the cell outer membrane. In terms of biological role, together with LptE, is involved in the assembly of lipopolysaccharide (LPS) at the surface of the outer membrane. The chain is LPS-assembly protein LptD from Bordetella pertussis (strain Tohama I / ATCC BAA-589 / NCTC 13251).